The following is a 130-amino-acid chain: Small ribosomal subunit protein uS8z/uS8w (130 aa).

Belongs to the universal ribosomal protein uS8 family.

The protein resides in the cytoplasm. The chain is Small ribosomal subunit protein uS8z/uS8w (RPS15AA) from Arabidopsis thaliana (Mouse-ear cress).